The sequence spans 222 residues: dTTP/UTP pyrophosphatase (222 aa).

The active-site Proton acceptor is aspartate 83.

Belongs to the Maf family. YhdE subfamily. Requires a divalent metal cation as cofactor.

The protein localises to the cytoplasm. The enzyme catalyses dTTP + H2O = dTMP + diphosphate + H(+). It catalyses the reaction UTP + H2O = UMP + diphosphate + H(+). In terms of biological role, nucleoside triphosphate pyrophosphatase that hydrolyzes dTTP and UTP. May have a dual role in cell division arrest and in preventing the incorporation of modified nucleotides into cellular nucleic acids. The sequence is that of dTTP/UTP pyrophosphatase from Desulfitobacterium hafniense (strain Y51).